We begin with the raw amino-acid sequence, 212 residues long: MATVTILSPKSIPKVTDSKFGARVSDQIVNVVKCGKSGRRLKLAKLVSAAGLSQIEPDINEDPIGQFETNSIEMEDFKYGYYDGAHTYYEGEVQKGTFWGAIADDIAAVDQTNGFQGLISCMFLPAIALGMYFDAPGEYLFIGAALFTVVFCIIEMDKPDQPHNFEPQIYKLERGARDKLINDYNTMSIWDFNDKYGDVWDFTIEKDDIATR.

Residues 1 to 48 (MATVTILSPKSIPKVTDSKFGARVSDQIVNVVKCGKSGRRLKLAKLVS) constitute a chloroplast transit peptide. 2 helical membrane passes run 115 to 135 (FQGL…YFDA) and 136 to 156 (PGEY…IIEM).

As to quaternary structure, part of the chloroplast NDH complex, composed of a mixture of chloroplast and nucleus encoded subunits. Component of the NDH subcomplex B, at least composed of PnsB1, PnsB2, PnsB3, PnsB4 and PnsB5.

It localises to the plastid. The protein resides in the chloroplast membrane. Its function is as follows. NDH shuttles electrons from NAD(P)H:plastoquinone, via FMN and iron-sulfur (Fe-S) centers, to quinones in the photosynthetic chain and possibly in a chloroplast respiratory chain. The immediate electron acceptor for the enzyme in this species is believed to be plastoquinone. Couples the redox reaction to proton translocation, and thus conserves the redox energy in a proton gradient. The sequence is that of Photosynthetic NDH subunit of subcomplex B 5, chloroplastic from Arabidopsis thaliana (Mouse-ear cress).